A 330-amino-acid polypeptide reads, in one-letter code: Pyridoxal 5'-phosphate synthase subunit PdxS (330 aa).

Asp23 is a binding site for D-ribose 5-phosphate. Catalysis depends on Lys80, which acts as the Schiff-base intermediate with D-ribose 5-phosphate. Gly152 contacts D-ribose 5-phosphate. Arg164 provides a ligand contact to D-glyceraldehyde 3-phosphate. D-ribose 5-phosphate is bound by residues Gly250 and 271 to 272 (GS).

It belongs to the PdxS/SNZ family. In terms of assembly, in the presence of PdxT, forms a dodecamer of heterodimers.

It catalyses the reaction aldehydo-D-ribose 5-phosphate + D-glyceraldehyde 3-phosphate + L-glutamine = pyridoxal 5'-phosphate + L-glutamate + phosphate + 3 H2O + H(+). Its pathway is cofactor biosynthesis; pyridoxal 5'-phosphate biosynthesis. Functionally, catalyzes the formation of pyridoxal 5'-phosphate from ribose 5-phosphate (RBP), glyceraldehyde 3-phosphate (G3P) and ammonia. The ammonia is provided by the PdxT subunit. Can also use ribulose 5-phosphate and dihydroxyacetone phosphate as substrates, resulting from enzyme-catalyzed isomerization of RBP and G3P, respectively. This is Pyridoxal 5'-phosphate synthase subunit PdxS from Methanocaldococcus jannaschii (strain ATCC 43067 / DSM 2661 / JAL-1 / JCM 10045 / NBRC 100440) (Methanococcus jannaschii).